Consider the following 337-residue polypeptide: Cholinesterase 2 (337 aa).

The active-site Acyl-ester intermediate is Ser99. Cys153 and Cys165 are disulfide-bonded. The active-site Charge relay system is the Glu224. Asn290 carries N-linked (GlcNAc...) asparagine glycosylation.

Belongs to the type-B carboxylesterase/lipase family.

It catalyses the reaction an acylcholine + H2O = a carboxylate + choline + H(+). This is Cholinesterase 2 (CHE2) from Branchiostoma lanceolatum (Common lancelet).